We begin with the raw amino-acid sequence, 177 residues long: MAELTTIARPYAKAAFDVAVEHNAVDTWAEMLTFAALVSENETMQPLLTGSLASTKLAALFISVCGEQINEQGQNLIKVMAENGRLKVLPAVSELFAQYRNEWAKEVEADVVSAAELSSEQQQQISNSLEKRLARKVKLNCSTDAALIAGVIIKAGDLVIDGSVRGKLSRLSEKLQS.

The protein belongs to the ATPase delta chain family. As to quaternary structure, F-type ATPases have 2 components, F(1) - the catalytic core - and F(0) - the membrane proton channel. F(1) has five subunits: alpha(3), beta(3), gamma(1), delta(1), epsilon(1). F(0) has three main subunits: a(1), b(2) and c(10-14). The alpha and beta chains form an alternating ring which encloses part of the gamma chain. F(1) is attached to F(0) by a central stalk formed by the gamma and epsilon chains, while a peripheral stalk is formed by the delta and b chains.

The protein resides in the cell inner membrane. Its function is as follows. F(1)F(0) ATP synthase produces ATP from ADP in the presence of a proton or sodium gradient. F-type ATPases consist of two structural domains, F(1) containing the extramembraneous catalytic core and F(0) containing the membrane proton channel, linked together by a central stalk and a peripheral stalk. During catalysis, ATP synthesis in the catalytic domain of F(1) is coupled via a rotary mechanism of the central stalk subunits to proton translocation. Functionally, this protein is part of the stalk that links CF(0) to CF(1). It either transmits conformational changes from CF(0) to CF(1) or is implicated in proton conduction. This chain is ATP synthase subunit delta, found in Shewanella sp. (strain ANA-3).